The following is a 295-amino-acid chain: Protoheme IX farnesyltransferase 2 (295 aa).

9 consecutive transmembrane segments (helical) span residues 9 to 29 (ITKP…FFLA), 36 to 56 (FALF…GCVF), 83 to 103 (LPLA…LLYV), 108 to 128 (LSAF…SLWL), 135 to 155 (GTLV…CAVS), 163 to 183 (VTLL…IAIF), 209 to 229 (IVLY…GGYA), 230 to 250 (GLGY…MAWG), and 264 to 284 (VFGF…VDSQ).

It belongs to the UbiA prenyltransferase family. Protoheme IX farnesyltransferase subfamily.

It localises to the cell inner membrane. It carries out the reaction heme b + (2E,6E)-farnesyl diphosphate + H2O = Fe(II)-heme o + diphosphate. The protein operates within porphyrin-containing compound metabolism; heme O biosynthesis; heme O from protoheme: step 1/1. Converts heme B (protoheme IX) to heme O by substitution of the vinyl group on carbon 2 of heme B porphyrin ring with a hydroxyethyl farnesyl side group. This is Protoheme IX farnesyltransferase 2 from Pseudomonas putida (strain ATCC 47054 / DSM 6125 / CFBP 8728 / NCIMB 11950 / KT2440).